The following is a 156-amino-acid chain: Small ribosomal subunit protein uS7 (156 aa).

The protein belongs to the universal ribosomal protein uS7 family. As to quaternary structure, part of the 30S ribosomal subunit. Contacts proteins S9 and S11.

Functionally, one of the primary rRNA binding proteins, it binds directly to 16S rRNA where it nucleates assembly of the head domain of the 30S subunit. Is located at the subunit interface close to the decoding center, probably blocks exit of the E-site tRNA. The sequence is that of Small ribosomal subunit protein uS7 from Nitrobacter winogradskyi (strain ATCC 25391 / DSM 10237 / CIP 104748 / NCIMB 11846 / Nb-255).